The sequence spans 488 residues: 3-octaprenyl-4-hydroxybenzoate carboxy-lyase (488 aa).

N172 is a binding site for Mn(2+). Residues I175–R177, R189–L191, and R194–G195 each bind prenylated FMN. E238 is a Mn(2+) binding site. Catalysis depends on D287, which acts as the Proton donor.

Belongs to the UbiD family. In terms of assembly, homohexamer. It depends on prenylated FMN as a cofactor. Mn(2+) serves as cofactor.

It is found in the cell membrane. It carries out the reaction a 4-hydroxy-3-(all-trans-polyprenyl)benzoate + H(+) = a 2-(all-trans-polyprenyl)phenol + CO2. It functions in the pathway cofactor biosynthesis; ubiquinone biosynthesis. Its function is as follows. Catalyzes the decarboxylation of 3-octaprenyl-4-hydroxy benzoate to 2-octaprenylphenol, an intermediate step in ubiquinone biosynthesis. The sequence is that of 3-octaprenyl-4-hydroxybenzoate carboxy-lyase from Legionella pneumophila (strain Lens).